Reading from the N-terminus, the 179-residue chain is Ferric nitrobindin-like protein (179 aa).

The GXWXGXG signature appears at 17–23 (GRWEGLG).

Belongs to the nitrobindin family.

This is Ferric nitrobindin-like protein from Thermobifida fusca (strain YX).